A 162-amino-acid chain; its full sequence is Cyanate hydratase (162 aa).

Catalysis depends on residues R90, E93, and S116.

Belongs to the cyanase family.

The catalysed reaction is cyanate + hydrogencarbonate + 3 H(+) = NH4(+) + 2 CO2. Functionally, catalyzes the reaction of cyanate with bicarbonate to produce ammonia and carbon dioxide. The chain is Cyanate hydratase from Populus trichocarpa (Western balsam poplar).